We begin with the raw amino-acid sequence, 909 residues long: Yellow mounds protein A (909 aa).

Residues 7-283 (LNVVSRILNK…KNLFELKNNK (277 aa)) enclose the MIF4G domain. Disordered regions lie at residues 178 to 232 (SMGG…NNNI), 415 to 439 (MESSSNNNNSNSQLQFSLSSSSGIK), 460 to 537 (INLP…SSAP), 627 to 689 (VPPV…SEAR), and 704 to 774 (SLSG…AKKH). Positions 204–215 (DDDDHDEEDNEN) are enriched in acidic residues. Low complexity-rich tracts occupy residues 216–231 (NYENTTSTTNNINNNN) and 417–436 (SSSNNNNSNSQLQFSLSSSS). A compositionally biased stretch (polar residues) spans 473–490 (RSNSPSLSSVVKQPQSQQ). Low complexity predominate over residues 491-525 (NNNNNNNNNNNNTTITTTTSSNNNINNNNNNNNNN). A compositionally biased stretch (polar residues) spans 721 to 738 (STPTLKSTPAIVQNGGSI). Residues 739–756 (TSTSSSSSSSSSSSSSTT) are compositionally biased toward low complexity. The stretch at 845-877 (TMLFDLEEMAQEQQNLEKQNDQQQNLLTQNNQI) forms a coiled coil.

Functionally, plays as essential role in regulating terminal differentiation. This is Yellow mounds protein A (yelA) from Dictyostelium discoideum (Social amoeba).